The chain runs to 269 residues: Thiazole synthase (269 aa).

Lys105 (schiff-base intermediate with DXP) is an active-site residue. 1-deoxy-D-xylulose 5-phosphate is bound by residues Gly166, 192–193 (AG), and 214–215 (NT). Positions 245-269 (AMSAQDAAQPSTPVLGTPFWHHDHG) are disordered.

This sequence belongs to the ThiG family. As to quaternary structure, homotetramer. Forms heterodimers with either ThiH or ThiS.

It is found in the cytoplasm. It catalyses the reaction [ThiS sulfur-carrier protein]-C-terminal-Gly-aminoethanethioate + 2-iminoacetate + 1-deoxy-D-xylulose 5-phosphate = [ThiS sulfur-carrier protein]-C-terminal Gly-Gly + 2-[(2R,5Z)-2-carboxy-4-methylthiazol-5(2H)-ylidene]ethyl phosphate + 2 H2O + H(+). It participates in cofactor biosynthesis; thiamine diphosphate biosynthesis. Catalyzes the rearrangement of 1-deoxy-D-xylulose 5-phosphate (DXP) to produce the thiazole phosphate moiety of thiamine. Sulfur is provided by the thiocarboxylate moiety of the carrier protein ThiS. In vitro, sulfur can be provided by H(2)S. The sequence is that of Thiazole synthase from Paracidovorax citrulli (strain AAC00-1) (Acidovorax citrulli).